Reading from the N-terminus, the 186-residue chain is Iodotyrosine deiodinase (186 aa).

FMN is bound by residues 11–15 (RKTVR), 38–39 (PS), and serine 39. 3-iodo-L-tyrosine contacts are provided by methionine 41, glutamate 68, tyrosine 72, and lysine 92. Residues methionine 41, glutamate 68, tyrosine 72, and lysine 92 each coordinate L-tyrosine. Position 176 (arginine 176) interacts with FMN.

This sequence belongs to the nitroreductase family. In terms of assembly, homodimer. It depends on FMN as a cofactor.

The catalysed reaction is 2 iodide + L-tyrosine + 2 NADP(+) = 3,5-diiodo-L-tyrosine + 2 NADPH + H(+). It carries out the reaction iodide + L-tyrosine + NADP(+) = 3-iodo-L-tyrosine + NADPH. It catalyses the reaction 3-iodo-L-tyrosine + iodide + NADP(+) = 3,5-diiodo-L-tyrosine + NADPH + H(+). The enzyme catalyses L-tyrosine + chloride + NADP(+) = 3-chloro-L-tyrosine + NADPH. The catalysed reaction is bromide + L-tyrosine + NADP(+) = 3-bromo-L-tyrosine + NADPH. Catalyzes the dehalogenation of halotyrosines such as 3-bromo-L-tyrosine, 3-chloro-L-tyrosine, 3-iodo-L-tyrosine and 3,5-diiodo-L-tyrosine. Activity towards 2-iodophenol is weak. The chain is Iodotyrosine deiodinase from Thermotoga neapolitana (strain ATCC 49049 / DSM 4359 / NBRC 107923 / NS-E).